The primary structure comprises 349 residues: Protein-glutamate methylesterase/protein-glutamine glutaminase (349 aa).

Positions 5 to 122 (RVLSVDDSAL…REGMLAYSEM (118 aa)) constitute a Response regulatory domain. Position 56 is a 4-aspartylphosphate (Asp-56). Residues 152–344 (LLSSEKLIAI…QQMLATISAG (193 aa)) form the CheB-type methylesterase domain. Active-site residues include Ser-164, His-190, and Asp-286.

It belongs to the CheB family. Post-translationally, phosphorylated by CheA. Phosphorylation of the N-terminal regulatory domain activates the methylesterase activity.

It is found in the cytoplasm. It carries out the reaction [protein]-L-glutamate 5-O-methyl ester + H2O = L-glutamyl-[protein] + methanol + H(+). The catalysed reaction is L-glutaminyl-[protein] + H2O = L-glutamyl-[protein] + NH4(+). In terms of biological role, involved in chemotaxis. Part of a chemotaxis signal transduction system that modulates chemotaxis in response to various stimuli. Catalyzes the demethylation of specific methylglutamate residues introduced into the chemoreceptors (methyl-accepting chemotaxis proteins or MCP) by CheR. Also mediates the irreversible deamidation of specific glutamine residues to glutamic acid. This Shigella flexneri protein is Protein-glutamate methylesterase/protein-glutamine glutaminase.